The primary structure comprises 515 residues: 1-pyrroline-5-carboxylate dehydrogenase 2 (515 aa).

Active-site residues include Glu286 and Cys320.

Belongs to the aldehyde dehydrogenase family. RocA subfamily.

The enzyme catalyses L-glutamate 5-semialdehyde + NAD(+) + H2O = L-glutamate + NADH + 2 H(+). Its pathway is amino-acid degradation; L-proline degradation into L-glutamate; L-glutamate from L-proline: step 2/2. This is 1-pyrroline-5-carboxylate dehydrogenase 2 (rocA2) from Halalkalibacterium halodurans (strain ATCC BAA-125 / DSM 18197 / FERM 7344 / JCM 9153 / C-125) (Bacillus halodurans).